We begin with the raw amino-acid sequence, 465 residues long: Monogalactosyldiacylglycerol synthase 3, chloroplastic (465 aa).

Residues H86, R255, 365 to 369, and E387 contribute to the UDP site; that span reads GTIAE.

It belongs to the glycosyltransferase 28 family. Expressed mainly in roots. Detected in flowers, leaves, stems, siliques and pollen tubes.

Its subcellular location is the plastid. The protein resides in the chloroplast outer membrane. It catalyses the reaction a 1,2-diacyl-sn-glycerol + UDP-alpha-D-galactose = a 1,2-diacyl-3-O-(beta-D-galactosyl)-sn-glycerol + UDP + H(+). The enzyme catalyses 1,2-di-(9Z,12Z-octadecadienoyl)-sn-glycerol + UDP-alpha-D-galactose = 1,2-di-(9Z,12Z-octadecadienoyl)-3-beta-D-galactosyl-sn-glycerol + UDP + H(+). The catalysed reaction is 1-(9Z-octadecenoyl)-2-hexadecanoyl-sn-glycerol + UDP-alpha-D-galactose = 1-(9Z-octadecenoyl)-2-hexadecanoyl-3-beta-D-galactosyl-sn-glycerol + UDP + H(+). It carries out the reaction 1,2-di-(9Z-octadecenoyl)-sn-glycerol + UDP-alpha-D-galactose = 1,2-di-(9Z-octadecenoyl)-3-beta-D-galactosyl-sn-glycerol + UDP + H(+). Its activity is regulated as follows. Inhibited by galvestine-1. Its function is as follows. Involved in the synthesis of monogalactosyldiacylglycerol, the major structural component of photosynthetic membranes and in the chloroplast envelope biogenesis. Can use both prokaryotic (18:1/16:0) or eukaryotic (18:2/18:2) 1,2-diacylglycerol species, but operates with some preference for the eukaryotic one. Plays a minor role in galactolipid synthesis in chloroplasts. Is essential for membrane lipid remodeling in phosphate-starved roots. Acts as the major factor involved in digalactosyldiacylglycerol (DGDG) biosynthesis in phosphate-starved roots. Does not seem to be required for plant growth under nutrient-sufficient conditions. Required for membrane lipid remodeling in plants grown in acidic conditions. This Arabidopsis thaliana (Mouse-ear cress) protein is Monogalactosyldiacylglycerol synthase 3, chloroplastic.